A 104-amino-acid chain; its full sequence is Met repressor (104 aa).

The protein belongs to the MetJ family. In terms of assembly, homodimer.

It localises to the cytoplasm. In terms of biological role, this regulatory protein, when combined with SAM (S-adenosylmethionine) represses the expression of the methionine regulon and of enzymes involved in SAM synthesis. The polypeptide is Met repressor (Shewanella oneidensis (strain ATCC 700550 / JCM 31522 / CIP 106686 / LMG 19005 / NCIMB 14063 / MR-1)).